The following is an 803-amino-acid chain: E3 ubiquitin-protein ligase UHRF2 (803 aa).

Positions 1 to 78 (MWIQVRTIDG…IQLLVRPDSS (78 aa)) constitute a Ubiquitin-like domain. 4 stretches are compositionally biased toward polar residues: residues 79–96 (LPST…SSHN), 106–115 (GGSSSQPSTS), 167–181 (KNGS…NVNH), and 189–200 (KLDNVPSTSNSD). 2 disordered regions span residues 79 to 115 (LPST…PSTS) and 154 to 200 (RASD…SNSD). The interval 118–312 (TCLIDPGFGL…VDEIFKIEKP (195 aa)) is required for interaction with histone H3. The tract at residues 195-289 (STSNSDSVAA…KEVRVKVFLG (95 aa)) is interaction with PCNP. Residues 340–396 (DKTCHMCSCHKCGEKRDPNMQLLCDECNMAYHIYCLSPPLDKVPEEEYWYCPSCKTD) form a PHD-type zinc finger. Positions 415 to 645 (KMPSASTESR…LQYPAGYPSE (231 aa)) are methyl-CpG binding and interaction with HDAC1. The region spanning 449–613 (GPIPGIPVGS…FLVWRYLLRR (165 aa)) is the YDG domain. Residues 643–676 (PSEKEGKKTKGQSKKQGSEATKRPASDDECPGDS) are disordered. Positions 658 to 668 (QGSEATKRPAS) are enriched in basic and acidic residues. Ser668 carries the post-translational modification Phosphoserine. The RING-type zinc-finger motif lies at 734–773 (CVCCQELVYQPVTTECFHNVCKDCLQRSFKAQVFSCPACR).

Homodimer; disulfide-linked. Binds methylated CpG containing oligonucleotides. Interacts with H3; the interaction has a preference for the 'Lys-9' trimethylated form of H3 (H3K9me3). Interacts with PCNP. Interacts with HDAC1. Interacts directly with CCNE1; the interaction ubiquitinates CCNE1 and appears independent of CCNE1 phosphorylation. Interacts with CCND1; the interaction ubiquitinates CCND1 and appears independent of CCND1 phosphorylation. Interacts with p53/TP53 and RB1. Interacts with UBE2I. Interacts with ZNF618. Interacts with UHRF1. Interacts with FANCD2. Interacts with ATR. Interacts with PCNA. Post-translationally, may be autoubiquitinated; which may lead to proteasomal degradation. Phosphorylated. Phosphorylation may be mediated by CDK2. In terms of processing, autosumoylated. Mostly detected in several tissues, including the thymus, spleen, lung, adrenal gland, and ovary. In addition, found in several tissues in the brain (cerebellum, hippocampus, and cerebral cortex).

The protein localises to the nucleus. It is found in the chromosome. The catalysed reaction is S-ubiquitinyl-[E2 ubiquitin-conjugating enzyme]-L-cysteine + [acceptor protein]-L-lysine = [E2 ubiquitin-conjugating enzyme]-L-cysteine + N(6)-ubiquitinyl-[acceptor protein]-L-lysine.. Its pathway is protein modification; protein ubiquitination. With respect to regulation, E3 ligase activity is robustly activated by 5-hydroxy-methylcytosine. E3 ubiquitin ligase that plays important roles in DNA methylation, histone modifications, cell cycle and DNA repair. Acts as a specific reader for 5-hydroxymethylcytosine (5hmC) and thereby recruits various substrates to these sites to ubiquitinate them. This activity also allows the maintenance of 5mC levels at specific genomic loci and regulates neuron-related gene expression. Participates in cell cycle regulation by ubiquitinating cyclins CCND1 and CCNE1 and thus inducing G1 arrest. Also ubiquitinates PCNP leading to its degradation by the proteasome. Plays an active role in DNA damage repair by ubiquitinating p21/CDKN1A leading to its proteasomal degradation. Also promotes DNA repair by acting as an interstrand cross-links (ICLs) sensor. Mechanistically, cooperates with UHRF1 to ensure recruitment of FANCD2 to ICLs, leading to FANCD2 monoubiquitination and subsequent activation. Contributes to UV-induced DNA damage response by physically interacting with ATR in response to irradiation, thereby promoting ATR activation. This chain is E3 ubiquitin-protein ligase UHRF2 (Uhrf2), found in Mus musculus (Mouse).